A 538-amino-acid polypeptide reads, in one-letter code: Chaperonin GroEL 1 (538 aa).

Residues 29 to 32, 86 to 90, glycine 413, 478 to 480, and aspartate 494 contribute to the ATP site; these read TLGP, DGTTT, and NAA.

Belongs to the chaperonin (HSP60) family. In terms of assembly, forms a cylinder of 14 subunits composed of two heptameric rings stacked back-to-back. Interacts with the co-chaperonin GroES.

The protein resides in the cytoplasm. The catalysed reaction is ATP + H2O + a folded polypeptide = ADP + phosphate + an unfolded polypeptide.. In terms of biological role, together with its co-chaperonin GroES, plays an essential role in assisting protein folding. The GroEL-GroES system forms a nano-cage that allows encapsulation of the non-native substrate proteins and provides a physical environment optimized to promote and accelerate protein folding. This is Chaperonin GroEL 1 from Corynebacterium glutamicum (strain ATCC 13032 / DSM 20300 / JCM 1318 / BCRC 11384 / CCUG 27702 / LMG 3730 / NBRC 12168 / NCIMB 10025 / NRRL B-2784 / 534).